A 288-amino-acid polypeptide reads, in one-letter code: tRNA pseudouridine synthase B (288 aa).

The active-site Nucleophile is the aspartate 38.

This sequence belongs to the pseudouridine synthase TruB family. Type 1 subfamily.

It catalyses the reaction uridine(55) in tRNA = pseudouridine(55) in tRNA. Responsible for synthesis of pseudouridine from uracil-55 in the psi GC loop of transfer RNAs. This Carboxydothermus hydrogenoformans (strain ATCC BAA-161 / DSM 6008 / Z-2901) protein is tRNA pseudouridine synthase B.